The chain runs to 79 residues: Morintide mO1 (79 aa).

A signal peptide spans 1–20; sequence MAKLSFLSLFLLCLVATATA. One can recognise a Chitin-binding type-1 domain in the interval 21 to 63; sequence QNCGRQAGNRACANQLCCSQYGFCGSTSEYCSRANGCQSNCRG. 4 disulfide bridges follow: cysteine 23–cysteine 38, cysteine 32–cysteine 44, cysteine 37–cysteine 51, and cysteine 57–cysteine 61. The propeptide occupies 64 to 79; it reads GGGADGAGGEAGGGGP.

Leaves (at protein level).

In terms of biological role, chitin-binding protein which functions in defense against chitin-containing fungal pathogens. Inhibits the growth of budding hyphae in A.alternata and A.brassiciola. The sequence is that of Morintide mO1 from Moringa oleifera (Horseradish tree).